The sequence spans 161 residues: MEEGELKDTDHLIDIQLDEVTFVRRRPEVEHERAVAIFDLLEDNHFGIKGFQGPFRLVLSLAENRLLFDIRDGEDKPLRKVILSLRPFRMIVKDYFMICESYFSAIRSMTPAQIEAIDMGRRGLHNEGGAVLKERLAGKVVVDHDTARRLFTLICVLHARG.

The protein belongs to the UPF0262 family.

This Rhodospirillum rubrum (strain ATCC 11170 / ATH 1.1.1 / DSM 467 / LMG 4362 / NCIMB 8255 / S1) protein is UPF0262 protein Rru_A2770.